Here is a 496-residue protein sequence, read N- to C-terminus: Probable CtpA-like serine protease (496 aa).

The segment covering 1-16 (MDDKQHTSSSDDERAE) has biased composition (basic and acidic residues). A disordered region spans residues 1 to 27 (MDDKQHTSSSDDERAEIATSNQDQETN). Residues 18 to 27 (ATSNQDQETN) show a composition bias toward polar residues. The chain crosses the membrane as a helical span at residues 39 to 59 (FISILIGTILITAVITVVAYI). The region spanning 124 to 206 (TKSFNEGVSG…TEVTLTVQRG (83 aa)) is the PDZ domain. Catalysis depends on charge relay system residues Ser329, Asp340, and Lys354.

The protein belongs to the peptidase S41A family.

The protein localises to the cell membrane. This chain is Probable CtpA-like serine protease, found in Staphylococcus aureus (strain MSSA476).